Here is a 226-residue protein sequence, read N- to C-terminus: Cytidylate kinase (226 aa).

Position 12–20 (12–20 (GPSGAGKGT)) interacts with ATP.

The protein belongs to the cytidylate kinase family. Type 1 subfamily.

Its subcellular location is the cytoplasm. It carries out the reaction CMP + ATP = CDP + ADP. It catalyses the reaction dCMP + ATP = dCDP + ADP. In Colwellia psychrerythraea (strain 34H / ATCC BAA-681) (Vibrio psychroerythus), this protein is Cytidylate kinase.